Reading from the N-terminus, the 154-residue chain is 6,7-dimethyl-8-ribityllumazine synthase (154 aa).

5-amino-6-(D-ribitylamino)uracil-binding positions include Phe-22, 56–58 (AFE), and 80–82 (TVI). 85–86 (ST) is a (2S)-2-hydroxy-3-oxobutyl phosphate binding site. His-88 acts as the Proton donor in catalysis. Residue Phe-113 participates in 5-amino-6-(D-ribitylamino)uracil binding. Arg-127 serves as a coordination point for (2S)-2-hydroxy-3-oxobutyl phosphate.

It belongs to the DMRL synthase family.

It carries out the reaction (2S)-2-hydroxy-3-oxobutyl phosphate + 5-amino-6-(D-ribitylamino)uracil = 6,7-dimethyl-8-(1-D-ribityl)lumazine + phosphate + 2 H2O + H(+). The protein operates within cofactor biosynthesis; riboflavin biosynthesis; riboflavin from 2-hydroxy-3-oxobutyl phosphate and 5-amino-6-(D-ribitylamino)uracil: step 1/2. Catalyzes the formation of 6,7-dimethyl-8-ribityllumazine by condensation of 5-amino-6-(D-ribitylamino)uracil with 3,4-dihydroxy-2-butanone 4-phosphate. This is the penultimate step in the biosynthesis of riboflavin. This chain is 6,7-dimethyl-8-ribityllumazine synthase, found in Lactococcus lactis subsp. cremoris (strain MG1363).